The chain runs to 143 residues: Hemoglobin-1 (143 aa).

Ser2 is modified (N-acetylserine). One can recognise a Globin domain in the interval Ser2–Met143. Residue His97 coordinates heme b.

It belongs to the globin family. As to quaternary structure, monomer.

The protein resides in the cytoplasm. In terms of biological role, serves to transport hydrogen sulfide to autotrophic bacteria. The protein is Hemoglobin-1 of Phacoides pectinatus (Thick lucine).